A 93-amino-acid chain; its full sequence is Large ribosomal subunit protein uL23 (93 aa).

Belongs to the universal ribosomal protein uL23 family. Part of the 50S ribosomal subunit. Contacts protein L29, and trigger factor when it is bound to the ribosome.

Its function is as follows. One of the early assembly proteins it binds 23S rRNA. One of the proteins that surrounds the polypeptide exit tunnel on the outside of the ribosome. Forms the main docking site for trigger factor binding to the ribosome. The polypeptide is Large ribosomal subunit protein uL23 (Campylobacter curvus (strain 525.92)).